We begin with the raw amino-acid sequence, 362 residues long: Mannose-1-phosphate guanyltransferase (362 aa).

It belongs to the transferase hexapeptide repeat family.

It localises to the cytoplasm. It carries out the reaction alpha-D-mannose 1-phosphate + GTP + H(+) = GDP-alpha-D-mannose + diphosphate. Its pathway is nucleotide-sugar biosynthesis; GDP-alpha-D-mannose biosynthesis; GDP-alpha-D-mannose from alpha-D-mannose 1-phosphate (GTP route): step 1/1. Its function is as follows. Involved in cell wall synthesis where it is required for glycosylation. Involved in cell cycle progression through cell-size checkpoint. The polypeptide is Mannose-1-phosphate guanyltransferase (MPG1) (Debaryomyces hansenii (strain ATCC 36239 / CBS 767 / BCRC 21394 / JCM 1990 / NBRC 0083 / IGC 2968) (Yeast)).